The chain runs to 302 residues: uncharacterized protein (302 aa).

Positions 19–90 (QWLFSVLKTA…GELDILFEDN (72 aa)) constitute an S4 RNA-binding domain. Aspartate 138 is an active-site residue. The segment at 182–205 (KGTINSPIGRDRSHPTRRRVSPGG) is disordered.

It belongs to the pseudouridine synthase RluA family.

The enzyme catalyses a uridine in RNA = a pseudouridine in RNA. This is an uncharacterized protein from Bacillus subtilis (strain 168).